The chain runs to 772 residues: MRNRRKAVSLLTGLLVTAQLFPTAALAADSSESALNKAPGYQDFPAYYSDSAHADDQVTHPDVVVLEEPWNGYRYWAVYTPNVMRISIYENPSIVASSDGVHWVEPEGLSNPIEPQPPSTRYHNCDADMVYNAEYDAMMAYWNWADDQGGGVGAEVRLRISYDGVHWGVPVTYDEMTRVWSKPTSDAERQVADGEDDFITAIASPDRYDMLSPTIVYDDFRDVFILWANNTGDVGYQNGQANFVEMRYSDDGITWGEPVRVNGFLGLDENGQQLAPWHQDVQYVPDLKEFVCISQCFAGRNPDGSVLHLTTSKDGVNWEQVGTKPLLSPGPDGSWDDFQIYRSSFYYEPGSSAGDGTMRVWYSALQKDTNNKMVADSSGNLTIQAKSEDDRIWRIGYAENSFVEMMRVLLDDPGYTTPALVSGNSLMLSAETTSLPTGDVMKLETSFAPVDTSDQVVKYTSSDPDVATVDEFGTITGVSVGSARIMAETREGLSDDLEIAVVENPYTLIPQSNMTATATSVYGGTTEGPASNVLDGNVRTIWHTNYAPKDELPQSITVSFDQPYTVGRFVYTPRQNGTNGIISEYELYAIHQDGSKDLVASGSDWALDAKDKTVSFAPVEAVGLELKAIAGAGGFGTAAELNVYAYGPIEPAPVYVPVDDRDASLVFTGAWNSDSNGSFYEGTARYTNEIGASVEFTFVGTAIRWYGQNDVNFGAAEVYVDGVLAGEVNVYGPAAAQQLLFEADGLAYGKHTIRIVCVSPVVDFDYFSYVGE.

Positions 1–27 (MRNRRKAVSLLTGLLVTAQLFPTAALA) are cleaved as a signal peptide. Substrate-binding residues include Ser87 and His123. Asp126 lines the a divalent metal cation pocket. Positions 180 to 402 (WSKPTSDAER…WRIGYAENSF (223 aa)) are deacetylase activity. Position 236 (Tyr236) interacts with substrate. A divalent metal cation is bound at residue His278. Residues 494–605 (SDDLEIAVVE…KDLVASGSDW (112 aa)) form the F5/8 type C domain. The interval 502–765 (VENPYTLIPQ…VCVSPVVDFD (264 aa)) is CBM32 carbohydrate-binding domain. The segment at 515–772 (TATATSVYGG…DFDYFSYVGE (258 aa)) is not required for activity on soluble substrates.

The cofactor is a divalent metal cation.

The catalysed reaction is an N-acetyl-alpha-D-galactosaminyl-(1-&gt;3)-[alpha-L-fucosyl-(1-&gt;2)]-beta-D-galactosyl derivative + H2O = an alpha-D-galactosaminyl-(1-&gt;3)-[alpha-L-fucosyl-(1-&gt;2)]-beta-D-galactosyl derivative + acetate. Its activity is regulated as follows. Inhibited by EDTA. Functionally, one of an enzyme pair that work together to convert the A antigen to the H antigen of the O blood type, which together release galactosamine. Catalyzes the first step in the conversion, generating the substrate for the subsequent enzyme (FpGalNase, AC P0DTR5). Works on many different A antigen subtypes. Glu-90 probably activates a nucleophilic water molecule to start the deacetylation reaction. In Flavonifractor plautii (Fusobacterium plautii), this protein is A type blood N-acetyl-alpha-D-galactosamine deacetylase.